The chain runs to 1630 residues: Merozoite surface protein 1 (1630 aa).

Residues 1-19 (MKIIFFLCSFLFFIINTQC) form the signal peptide. The segment at 60-113 (TKGASAQSGTSGTSGTSGPSGPSGTSPSSRSNTLPRSNTSSGASPPADASDSDA) is disordered. Residues 67–84 (SGTSGTSGTSGPSGPSGT) form a tripeptide SG(TP) repeat region. Residues 67-88 (SGTSGTSGTSGPSGPSGTSPSS) show a composition bias toward low complexity. Residues 89–98 (RSNTLPRSNT) are compositionally biased toward polar residues. The N-linked (GlcNAc...) asparagine glycan is linked to Asn-97. Over residues 99–108 (SSGASPPADA) the composition is skewed to low complexity. N-linked (GlcNAc...) asparagine glycosylation occurs at Asn-259. The disordered stretch occupies residues 680–755 (KKNIKTEGQS…VPTPPAPVNN (76 aa)). Polar residues-rich tracts occupy residues 685–695 (TEGQSDNSEPS) and 702–713 (GQATTKPGQQAG). The span at 721 to 732 (VQAQAQEQKQAQ) shows a compositional bias: low complexity. Asn-755, Asn-759, Asn-774, and Asn-835 each carry an N-linked (GlcNAc...) asparagine glycan. The interval 884–906 (SMQPLSLTPQDKPEVSANDDTSH) is disordered. 5 N-linked (GlcNAc...) asparagine glycosylation sites follow: Asn-911, Asn-955, Asn-1049, Asn-1156, and Asn-1165. A required for binding to host erythrocyte cell membrane region spans residues 993–1107 (QLSFDLYNKY…EESIQTEDNY (115 aa)). Over residues 1190-1203 (VSESGSDTLEQSQP) the composition is skewed to polar residues. Residues 1190–1220 (VSESGSDTLEQSQPKKPASTHVGAESNTITT) form a disordered region. 2 N-linked (GlcNAc...) asparagine glycosylation sites follow: Asn-1436 and Asn-1517. 2 consecutive EGF-like domains span residues 1521–1561 (HQCV…VENP) and 1562–1610 (NPTC…FCSS). 6 disulfides stabilise this stretch: Cys-1523–Cys-1534, Cys-1528–Cys-1544, Cys-1546–Cys-1557, Cys-1565–Cys-1578, Cys-1572–Cys-1592, and Cys-1594–Cys-1608. Ser-1609 carries GPI-anchor amidated serine lipidation. Residues 1610–1630 (SSNFLGISFLLILMLILYSFI) constitute a propeptide, removed in mature form.

Forms a complex composed of subunits p83, p30, p38, and p42 which remain non-covalently associated; the complex is formed at the merozoite surface prior to egress from host erythrocytes. Forms a complex composed of processed MSP1 subunits, MSP6 subunit p36 and MSP7; the complex is formed at the merozoite surface prior to egress from host erythrocytes. Within the complex, interacts (via subunit p38) with MSP6 subunit p36 and (via subunits p83, p30 and p38) with MSP7 (via subunit p22). Forms a complex composed of MSP1, MSP6, DBLMSP1 and DBLMSP2. Within the complex, interacts (via subunit p38) with DBLMSP1 and DBLMSP2. Forms a complex composed of MSP1, and rhoptry proteins RhopH3, RAP1 and CLAG9/RhopH3. Within the complex, interacts (via subunits p42 and p19) with RhopH3 (via C-terminus). Forms a complex composed of MSP1, MSP6, MSP7, MSP9 and MSP3; within the complex, MSP6 and MSP9 mediate the binding to the host erythrocyte. Interacts (via subunits p19 and p42) with MSP9; the interaction is direct; MSP1 subunits p19 or p42, and MSP9 form a co-ligand complex that interacts with host SLC4A1/Band 3 protein. May interact with PFD6. Interacts with host spectrin. As to quaternary structure, interacts with host glycophorin GYPA in a sialic acid-independent manner. In terms of assembly, interacts with host proinflammatory cytokine S100P; the interaction blocks S100P inflammatory and chemotactic activities. Interacts with host SLC4A1/Band 3 (via 5ABC region) on the host erythrocyte surface in a sialic acid-independent manner. In terms of processing, the p190 precursor is cleaved by SUB1 prior to merozoite egress into 4 subunits p83, p30, p38, and p42 which remain non-covalently associated. SUB1-mediated proteolytic cleavage occurs in an orderly manner; the first cleavage occurs at the p83/p30 site, followed by cleavage at the p30/p38 site, the last cleavage occurs at the p38/p42 site. The order of cleavage is essential for parasite viability. SUB1-mediated processing is essential for merozoite egress. In a second processing step during erythrocyte invasion, p42 is cleaved by SUB2 into p33 and p19; the latter remains attached to the merozoite surface via its GPI-anchor and stays on the surface during the subsequent ring stage.

It localises to the cell membrane. It is found in the secreted. Its subcellular location is the vacuole membrane. In terms of biological role, during the asexual blood stage, involved in merozoite egress from host erythrocytes possibly via its interaction with the host cytoskeleton protein spectrin resulting in the destabilization of the host cytoskeleton and thus leading to erythrocyte cell membrane rupture. Involved in the binding to host erythrocytes and is required for host erythrocyte invasion. Its function is as follows. By binding to host proinflammatory cytokine S100P may interfere with host immune responses. Functionally, involved in merozoite invasion of host erythrocytes. May play a role in the biogenesis and/or function of the food vacuole during the intraerythrocytic development. The sequence is that of Merozoite surface protein 1 from Plasmodium falciparum (isolate K1 / Thailand).